The primary structure comprises 137 residues: Protein Turandot X (137 aa).

A signal peptide spans 1–24 (MKVPVFQLSCLLCLIVCLLCSVKA).

Belongs to the Turandot family.

It localises to the secreted. Its function is as follows. A humoral factor that may play a role in stress tolerance. In Drosophila persimilis (Fruit fly), this protein is Protein Turandot X.